Reading from the N-terminus, the 243-residue chain is Probable 2-phosphosulfolactate phosphatase (243 aa).

This sequence belongs to the ComB family. It depends on Mg(2+) as a cofactor.

It carries out the reaction (2R)-O-phospho-3-sulfolactate + H2O = (2R)-3-sulfolactate + phosphate. The polypeptide is Probable 2-phosphosulfolactate phosphatase (Prochlorococcus marinus (strain SARG / CCMP1375 / SS120)).